We begin with the raw amino-acid sequence, 51 residues long: Large ribosomal subunit protein eL39 (51 aa).

This sequence belongs to the eukaryotic ribosomal protein eL39 family.

This Pyrobaculum islandicum (strain DSM 4184 / JCM 9189 / GEO3) protein is Large ribosomal subunit protein eL39.